A 1227-amino-acid chain; its full sequence is Anion exchange protein 3 (1227 aa).

The span at 1 to 11 shows a compositional bias: pro residues; the sequence is MANGVIPPPGG. Disordered regions lie at residues 1-256, 286-312, and 428-497; these read MANG…DEAE, KPSR…KKKK, and NDDK…GDGH. At 1–707 the chain is on the cytoplasmic side; the sequence is MANGVIPPPG…DLRDALHSQC (707 aa). Positions 58-75 are enriched in basic and acidic residues; it reads DPEKPSRSYSERDFEFHR. Composition is skewed to basic residues over residues 76–97 and 104–113; these read HTSH…KLRR and RHTRRKRKKE. The segment covering 134–152 has biased composition (acidic residues); sequence AEEEEEEEEEEEGESEAEP. Phosphoserine is present on residues serine 167, serine 170, serine 175, and serine 198. The span at 194 to 215 shows a compositional bias: low complexity; sequence QSDQSPQRSGSSPSPRARASRI. Position 294 is an omega-N-methylarginine (arginine 294). Over residues 435-448 the composition is skewed to low complexity; sequence FFPRNPSSSSVNSV. Basic and acidic residues predominate over residues 480-497; sequence HDPDAKEKPLHMPGGDGH. 4 helical membrane-spanning segments follow: residues 708 to 730, 736 to 773, 793 to 815, and 825 to 846; these read VAAV…GLLG, LMGV…LLVF, VWVG…SFLV, and IFAF…YKVF. A membrane (anion exchange) region spans residues 708–1227; the sequence is VAAVLFIYFA…DEYNELHMPV (520 aa). The N-linked (GlcNAc...) asparagine glycan is linked to asparagine 868. Residues 888–905 form a helical membrane-spanning segment; sequence ALLSLILMLGTFLIAFFL. Over 906-920 the chain is Cytoplasmic; the sequence is RKFRNSRFLGGKARR. 5 consecutive transmembrane segments (helical) span residues 921 to 941, 975 to 997, 1023 to 1044, 1078 to 1123, and 1150 to 1186; these read IIGD…DYSI, PFPP…LIFM, LLLI…LTAA, VTGV…IQLS, and MHLF…TVPL. Cysteine 1160 carries the S-palmitoyl cysteine lipid modification.

It belongs to the anion exchanger (TC 2.A.31) family. As to expression, expressed in the brain.

The protein localises to the cell membrane. It catalyses the reaction hydrogencarbonate(in) + chloride(out) = hydrogencarbonate(out) + chloride(in). Its activity is regulated as follows. Inhibited by 4,4'-diisothiocyanatostilbene-2,2'-disulfonic acid (DIDS). In terms of biological role, sodium-independent anion exchanger which mediates the electroneutral exchange of chloride for bicarbonate ions across the cell membrane. May be involved in the regulation of intracellular pH, and the modulation of cardiac action potential. This is Anion exchange protein 3 (Slc4a3) from Mus musculus (Mouse).